We begin with the raw amino-acid sequence, 428 residues long: MLLSKYFLPILKEEPSEAQVISHKLMLRSGMIMKQASGLYTWLPLGLKVLKNIENIVRSNMNKVGALEVLMPCIQPAHLWIESGRFEYYGKEMLKFQDRHDNTLLFGPTNEDMITDIFRRNIKSYKDLPKNLYHIQWKFRDEIRPRFGVMRGREFLMKDAYSFDINQENAVNTYNKMYKAYINTFRDLGVFAIPVIADNGPIGGNLSHEFHIIAETGESTIYYDKRFKILKDNPDIDVEEIKSWYAAAEEKHDVNKLSSFPEGITSSKGIEVGHIFYIGSKYSVNMNALINDEYGKLIPVEMSSYGIGISRLAAAIIEANCDKKGIIWPFSVAPFKVSLINLNIHDNKCVELAAKTDKELSNKNIEVLYDDTEARPGSKFATHDLIGSPYQVIIGPKKAANNIVELKDRKTGVLEDIEIENLINYIRI.

The protein belongs to the class-II aminoacyl-tRNA synthetase family. ProS type 2 subfamily. As to quaternary structure, homodimer.

The protein localises to the cytoplasm. It carries out the reaction tRNA(Pro) + L-proline + ATP = L-prolyl-tRNA(Pro) + AMP + diphosphate. Catalyzes the attachment of proline to tRNA(Pro) in a two-step reaction: proline is first activated by ATP to form Pro-AMP and then transferred to the acceptor end of tRNA(Pro). This chain is Proline--tRNA ligase, found in Rickettsia typhi (strain ATCC VR-144 / Wilmington).